The following is a 1289-amino-acid chain: uncharacterized protein (1289 aa).

Residues 615-733 (LDMYDVLKEL…DGMLSYSAQL (119 aa)) form the MHD1 domain. A disordered region spans residues 745 to 774 (DEPSYSLESSDTRSSLSLNNANVNHEKSRS). Residues 748-762 (SYSLESSDTRSSLSL) show a composition bias toward low complexity. A C2 domain is found at 834–966 (AQYHSSHNLE…DDGFPIDFSL (133 aa)). An MHD2 domain is found at 1044-1184 (YDAILPLFDY…KSVSELKDEV (141 aa)).

It localises to the cytoplasm. This is an uncharacterized protein from Saccharomyces cerevisiae (strain ATCC 204508 / S288c) (Baker's yeast).